The following is a 1477-amino-acid chain: Neuralized-like protein 4 (1477 aa).

2 disordered regions span residues 1–26 (MAEL…RKQP) and 168–196 (QPPP…RPDK). The NHR 1 domain occupies 1–167 (MAELHPRTGK…KCTQITVLSC (167 aa)). Acidic residues predominate over residues 171 to 183 (PEEEEEEDAEEQE). NHR domains follow at residues 250–417 (ALLF…IVHN), 450–616 (QLLF…IMDE), 645–813 (DLRF…LTGG), and 841–1010 (SHRF…TVSS). The interval 1012 to 1041 (LLEEPDATKPPSITSESEEEEDPADHGDPH) is disordered. In terms of domain architecture, NHR 6 spans 1048–1211 (SLQFLANHGK…QCEQVSIVTG (164 aa)).

Post-translationally, ubiquitinated. This ubiquitination leads to proteasomal degradation.

It is found in the cytoplasm. The protein resides in the cytoskeleton. The protein localises to the microtubule organizing center. It localises to the centrosome. Its subcellular location is the centriole. Promotes CCP110 ubiquitination and proteasome-dependent degradation. By counteracting accumulation of CP110, maintains normal centriolar homeostasis and preventing formation of ectopic microtubular organizing centers. The chain is Neuralized-like protein 4 (neurl4) from Xenopus tropicalis (Western clawed frog).